A 202-amino-acid polypeptide reads, in one-letter code: MANIESEAVDFEPEEDDLMDEEGTAIDGADVSPRAGHPRLKSAIAGANGESAKKTKGRGFREEKDSDRQRRLSSRDFESLGSDGRPGPQRSVEGWIILVSGVHEETQEEDITNAFGDFGEIKNLNLNLDRRSGYVKGYALIEYEKKEEAQSAISAMNGAELLTQNVSVDWAFSSGPSGGESYRRKNSRYGRSQRSRSPRRRY.

Disordered regions lie at residues 1 to 92 (MANI…QRSV) and 173 to 202 (SSGPSGGESYRRKNSRYGRSQRSRSPRRRY). The segment covering 7–24 (EAVDFEPEEDDLMDEEGT) has biased composition (acidic residues). Serine 32 carries the post-translational modification Phosphoserine. Positions 59–78 (GFREEKDSDRQRRLSSRDFE) are enriched in basic and acidic residues. Residues 95–173 (WIILVSGVHE…QNVSVDWAFS (79 aa)) enclose the RRM domain. Residues 184 to 202 (RKNSRYGRSQRSRSPRRRY) are compositionally biased toward basic residues.

The protein belongs to the RBM8A family. As to quaternary structure, heterodimer with MAGO. Part of the mRNA splicing-dependent exon junction complex (EJC); the core complex contains MLN51/CASC3, EIF4A3, MAGO and Y14. Interacts with PYM. The interaction with PYM is direct and dissociates the EJC from spliced mRNAs. Weakly interacts with EIF4A3. In terms of tissue distribution, expressed in root and shoot meristems, cotyledons, vascular tissues of leaves, receptacle of flowers and siliques, and pollen grains.

Its subcellular location is the nucleus. It localises to the nucleolus. The protein localises to the nucleus speckle. The protein resides in the cytoplasm. Core component of the splicing-dependent multiprotein exon junction complex (EJC) deposited at splice junctions on mRNAs. The EJC is a dynamic structure consisting of core proteins and several peripheral nuclear and cytoplasmic associated factors that join the complex only transiently either during EJC assembly or during subsequent mRNA metabolism. The EJC marks the position of the exon-exon junction in the mature mRNA for the gene expression machinery and the core components remain bound to spliced mRNAs throughout all stages of mRNA metabolism thereby influencing downstream processes including nuclear mRNA export, subcellular mRNA localization, translation efficiency and nonsense-mediated mRNA decay (NMD). The MAGO-Y14 heterodimer inhibits the ATPase activity of EIF4A3, thereby trapping the ATP-bound EJC core onto spliced mRNA in a stable conformation. The MAGO-Y14 heterodimer interacts with the EJC key regulator PYM leading to EJC disassembly in the cytoplasm. Can increase in vitro the expression from reporter constructs that contain leader introns required for the expression of different genes. In association with MAGO and PYM, participates in intron-mediated enhancement of gene expression. The MAGO-Y14 heterodimer works synergistically with the NMD pathway to regulate male gametophyte development. This Arabidopsis thaliana (Mouse-ear cress) protein is RNA-binding protein Y14.